The following is a 362-amino-acid chain: tRNA-specific 2-thiouridylase MnmA (362 aa).

ATP is bound by residues 13–20 (GLSGGVDS) and methionine 39. Residues 99-101 (NPD) are interaction with target base in tRNA. Cysteine 104 functions as the Nucleophile in the catalytic mechanism. Cysteine 104 and cysteine 200 form a disulfide bridge. Glycine 128 serves as a coordination point for ATP. The interaction with tRNA stretch occupies residues 150–152 (KDQ). Cysteine 200 serves as the catalytic Cysteine persulfide intermediate. Residues 310–311 (RY) form an interaction with tRNA region.

Belongs to the MnmA/TRMU family.

The protein localises to the cytoplasm. It catalyses the reaction S-sulfanyl-L-cysteinyl-[protein] + uridine(34) in tRNA + AH2 + ATP = 2-thiouridine(34) in tRNA + L-cysteinyl-[protein] + A + AMP + diphosphate + H(+). Functionally, catalyzes the 2-thiolation of uridine at the wobble position (U34) of tRNA, leading to the formation of s(2)U34. This chain is tRNA-specific 2-thiouridylase MnmA, found in Vesicomyosocius okutanii subsp. Calyptogena okutanii (strain HA).